Reading from the N-terminus, the 543-residue chain is Phosphoenolpyruvate carboxykinase (ATP) (543 aa).

Position 244 to 251 (244 to 251 (GLSGTGKT)) interacts with ATP.

It belongs to the phosphoenolpyruvate carboxykinase (ATP) family.

The enzyme catalyses oxaloacetate + ATP = phosphoenolpyruvate + ADP + CO2. It functions in the pathway carbohydrate biosynthesis; gluconeogenesis. The chain is Phosphoenolpyruvate carboxykinase (ATP) (PCK1) from Kluyveromyces lactis (strain ATCC 8585 / CBS 2359 / DSM 70799 / NBRC 1267 / NRRL Y-1140 / WM37) (Yeast).